The sequence spans 406 residues: Putative gustatory receptor 59f (406 aa).

The Cytoplasmic segment spans residues 1–36 (MRSSATKGAKLKNSPRERLSSFNPQYAERYKELYRT). The helical transmembrane segment at 37–57 (LFWLLLISVLANTAPITILPG) threads the bilayer. The Extracellular segment spans residues 58 to 69 (CPNRFYRLVHLS). Residues 70–90 (WMILWYGLFVLGSYWEFVLVT) traverse the membrane as a helical segment. Over 91 to 99 (TQRVSLDRY) the chain is Cytoplasmic. Residues 100–120 (LNAIESAIYVVHIFSIMLLTW) traverse the membrane as a helical segment. Residues 121–154 (QCRNWAPKLMTNIVTSDLNRAYTIDCNRTKRFIR) are Extracellular-facing. The N-linked (GlcNAc...) asparagine glycan is linked to N147. A helical transmembrane segment spans residues 155 to 175 (LQLFLVGIFACLAIFFNIWTH). The Cytoplasmic portion of the chain corresponds to 176 to 189 (KFVVYRSILSINSY). The chain crosses the membrane as a helical span at residues 190–210 (VMPNIISSISFAQYYLLLQGI). The Extracellular portion of the chain corresponds to 211–259 (AWRQRRLTEGLERELTHLHSPRISEVQKIRMHHANLIDFTKAVNRTFQY). N254 is a glycosylation site (N-linked (GlcNAc...) asparagine). A helical transmembrane segment spans residues 260 to 280 (SILLLFVGCFLNFNLVLFLVY). Over 281–364 (QGIENPSMAD…RQHVVCGVIN (84 aa)) the chain is Cytoplasmic. The helical transmembrane segment at 365-385 (LDLKFLTTLLVASADFFIFLL) threads the bilayer. The Extracellular portion of the chain corresponds to 386–406 (QYDVTYEALSKSVQGNVTRYK). N-linked (GlcNAc...) asparagine glycosylation occurs at N401.

This sequence belongs to the insect chemoreceptor superfamily. Gustatory receptor (GR) family. Gr10a subfamily. Expressed in the adult abdomen and wing. In larvae, is expressed in neurons of the terminal external chemosensory organ.

The protein localises to the cell membrane. Probable gustatory receptor which mediates acceptance or avoidance behavior, depending on its substrates. This is Putative gustatory receptor 59f (Gr59f) from Drosophila melanogaster (Fruit fly).